The sequence spans 208 residues: N-(5'-phosphoribosyl)anthranilate isomerase (208 aa).

It belongs to the TrpF family.

It catalyses the reaction N-(5-phospho-beta-D-ribosyl)anthranilate = 1-(2-carboxyphenylamino)-1-deoxy-D-ribulose 5-phosphate. The protein operates within amino-acid biosynthesis; L-tryptophan biosynthesis; L-tryptophan from chorismate: step 3/5. In Pyrococcus furiosus (strain ATCC 43587 / DSM 3638 / JCM 8422 / Vc1), this protein is N-(5'-phosphoribosyl)anthranilate isomerase.